The sequence spans 326 residues: Malate dehydrogenase (326 aa).

Position 11 to 17 (11 to 17 (GAAGQIG)) interacts with NAD(+). Arg92 and Arg98 together coordinate substrate. NAD(+)-binding positions include Asn105, Gln112, and 129–131 (VGN). Substrate contacts are provided by Asn131 and Arg162. His187 functions as the Proton acceptor in the catalytic mechanism.

The protein belongs to the LDH/MDH superfamily. MDH type 2 family.

The catalysed reaction is (S)-malate + NAD(+) = oxaloacetate + NADH + H(+). Catalyzes the reversible oxidation of malate to oxaloacetate. This Alkalilimnicola ehrlichii (strain ATCC BAA-1101 / DSM 17681 / MLHE-1) protein is Malate dehydrogenase.